Here is a 120-residue protein sequence, read N- to C-terminus: Large ribosomal subunit protein uL18 (120 aa).

It belongs to the universal ribosomal protein uL18 family. In terms of assembly, part of the 50S ribosomal subunit; part of the 5S rRNA/L5/L18/L25 subcomplex. Contacts the 5S and 23S rRNAs.

Its function is as follows. This is one of the proteins that bind and probably mediate the attachment of the 5S RNA into the large ribosomal subunit, where it forms part of the central protuberance. The protein is Large ribosomal subunit protein uL18 of Methylorubrum extorquens (strain CM4 / NCIMB 13688) (Methylobacterium extorquens).